The following is a 305-amino-acid chain: Ribonuclease Z (305 aa).

Zn(2+) is bound by residues histidine 61, histidine 63, aspartate 65, histidine 66, histidine 141, aspartate 209, and histidine 268. The active-site Proton acceptor is aspartate 65.

The protein belongs to the RNase Z family. Homodimer. Requires Zn(2+) as cofactor.

The enzyme catalyses Endonucleolytic cleavage of RNA, removing extra 3' nucleotides from tRNA precursor, generating 3' termini of tRNAs. A 3'-hydroxy group is left at the tRNA terminus and a 5'-phosphoryl group is left at the trailer molecule.. Functionally, zinc phosphodiesterase, which displays some tRNA 3'-processing endonuclease activity. Probably involved in tRNA maturation, by removing a 3'-trailer from precursor tRNA. The protein is Ribonuclease Z of Clostridioides difficile (strain 630) (Peptoclostridium difficile).